Consider the following 351-residue polypeptide: Calcium homeostasis modulator 1 (351 aa).

Over 1 to 20 (MDKFRMMFQFLQSNQESFMN) the chain is Cytoplasmic. A central pore region spans residues 9 to 36 (QFLQSNQESFMNGICGIMALASAQMYSS). Residues 21 to 36 (GICGIMALASAQMYSS) traverse the membrane as a helical segment. The Extracellular portion of the chain corresponds to 37–48 (FEFSCPCMPEYN). Disulfide bonds link Cys-41-Cys-126 and Cys-43-Cys-160. Residues 49–71 (YTYGIGLLIIPPIWFFLLGFVLN) traverse the membrane as a helical segment. The phospholipid-binding stretch occupies residues 62–69 (WFFLLGFV). The Cytoplasmic portion of the chain corresponds to 72–98 (NNVSVLAEEWKRPTGRRTKDPSVLRYM). Residues 99 to 124 (LCSITQRSLIAPAVWVSVTLMDGKSF) form a helical membrane-spanning segment. A lipid anchor (S-palmitoyl cysteine) is attached at Cys-100. Residues 104–116 (QRSLIAPAVWVSV) are phospholipid-binding. Residues 125–177 (LCAFSINLDIEKFGNASLVIGMTETEKLKFLARIPCKDLFEDNEVRVAATRYI) are Extracellular-facing. N-linked (GlcNAc...) asparagine glycosylation is present at Asn-139. The helical transmembrane segment at 178–203 (KCISQACGWMFLLMMTFTAFLIRAIR) threads the bilayer. Positions 189-199 (LLMMTFTAFLI) are phospholipid-binding. Residues 204 to 351 (PCFTQAAFLK…KEWAVYYSKV (148 aa)) lie on the Cytoplasmic side of the membrane. Cys-205 carries S-palmitoyl cysteine lipidation. Residues 259–281 (HRHQSKDTSDAEEEEKQRSDEDK) are disordered. The segment covering 263–281 (SKDTSDAEEEEKQRSDEDK) has biased composition (basic and acidic residues).

The protein belongs to the CALHM family. In terms of assembly, oligomerizes to form hexamers and octamers. Does not form gap junctions. Associates with CALHM3 as a pore-forming subunit in a hetero-hexameric channel complex. In terms of processing, N-glycosylated. Post-translationally, palmitoylated.

It localises to the cell membrane. The protein resides in the endoplasmic reticulum membrane. Its subcellular location is the basolateral cell membrane. The enzyme catalyses ATP(in) = ATP(out). It catalyses the reaction Ca(2+)(in) = Ca(2+)(out). It carries out the reaction Mg(2+)(in) = Mg(2+)(out). The catalysed reaction is Na(+)(in) = Na(+)(out). The enzyme catalyses K(+)(in) = K(+)(out). It catalyses the reaction Li(+)(in) = Li(+)(out). It carries out the reaction Rb(+)(in) = Rb(+)(out). The catalysed reaction is Cs(+)(in) = Cs(+)(out). The enzyme catalyses chloride(in) = chloride(out). Activated in response to membrane depolarization and low extracellular Ca(2+) concentration. Inhibited by ruthenium red. Its function is as follows. Pore-forming subunit of a voltage-gated ion channel. Has poor ion selectivity and forms a wide pore that mediates permeation of small ions including Ca(2+), Na(+), K(+) and Cl(-), as well as larger ions such as ATP(4-). The protein is Calcium homeostasis modulator 1 of Oryzias latipes (Japanese rice fish).